Reading from the N-terminus, the 246-residue chain is Transcription factor A, mitochondrial (246 aa).

A mitochondrion-targeting transit peptide spans 1–42; that stretch reads MAFLRSMWGVLSALGRSGAELCTGCGSRLRSPFSFVYLPRWF. The HMG box 1 DNA-binding region spans 50–118; sequence PKKPVSSYLR…VYKEEISRFK (69 aa). Phosphoserine; by PKA occurs at positions 55, 56, and 61. The residue at position 122 (T122) is a Phosphothreonine. Residues 155–219 constitute a DNA-binding region (HMG box 2); the sequence is PKRPRSAYNV…RYHNEMKSWE (65 aa). S160 carries the post-translational modification Phosphoserine; by PKA. Phosphoserine occurs at positions 193 and 195.

Monomer; binds DNA as a monomer. Homodimer. Component of the mitochondrial transcription initiation complex, composed at least of TFB2M, TFAM and POLRMT. In this complex TFAM recruits POLRMT to the promoter whereas TFB2M induces structural changes in POLRMT to enable promoter opening and trapping of the DNA non-template strand. Upon metabolic stress, forms a complex composed of FOXO3, SIRT3, TFAM and POLRMT. Interacts with TFB1M and TFB2M. Interacts with CLPX; this enhances DNA-binding. Phosphorylation by PKA within the HMG box 1 impairs DNA binding and promotes degradation by the AAA+ Lon protease.

It is found in the mitochondrion. Its subcellular location is the mitochondrion matrix. It localises to the mitochondrion nucleoid. Functionally, binds to the mitochondrial light strand promoter and functions in mitochondrial transcription regulation. Component of the mitochondrial transcription initiation complex, composed at least of TFB2M, TFAM and POLRMT that is required for basal transcription of mitochondrial DNA. In this complex, TFAM recruits POLRMT to a specific promoter whereas TFB2M induces structural changes in POLRMT to enable promoter opening and trapping of the DNA non-template strand. Required for accurate and efficient promoter recognition by the mitochondrial RNA polymerase. Promotes transcription initiation from the HSP1 and the light strand promoter by binding immediately upstream of transcriptional start sites. Is able to unwind DNA. Bends the mitochondrial light strand promoter DNA into a U-turn shape via its HMG boxes. Required for maintenance of normal levels of mitochondrial DNA. May play a role in organizing and compacting mitochondrial DNA. This chain is Transcription factor A, mitochondrial, found in Homo sapiens (Human).